Consider the following 135-residue polypeptide: Probable histone H2A.2 (135 aa).

This sequence belongs to the histone H2A family. The nucleosome is a histone octamer containing two molecules each of H2A, H2B, H3 and H4 assembled in one H3-H4 heterotetramer and two H2A-H2B heterodimers. The octamer wraps approximately 147 bp of DNA.

Its subcellular location is the nucleus. The protein resides in the chromosome. Core component of nucleosome. Nucleosomes wrap and compact DNA into chromatin, limiting DNA accessibility to the cellular machineries which require DNA as a template. Histones thereby play a central role in transcription regulation, DNA repair, DNA replication and chromosomal stability. DNA accessibility is regulated via a complex set of post-translational modifications of histones, also called histone code, and nucleosome remodeling. This Oryza sativa subsp. indica (Rice) protein is Probable histone H2A.2.